The chain runs to 640 residues: MPDLEKDMQKKEKDSRSKDEPAVPKLPVPPLQQTLQMYLQCMKHLVPEEQFRKTKSIVEQFGVAGGLGESLQLILEERREETTNWVFNYWLDDMYLNNRLALPVNSSPAIIFARQNFKDVNDQLRFAANLISGVQDYKALLDSHALPVDFARGQLSGQPLCMKQYYGLFSSYRLPGHTKDTLVAQKSCVMPEPEHIIVACNNQLFVLDVGINFRRLSEGDLFTQLRKIAKMAENEEEMLPPIGLLTTDGRTEWAEARTILMKDSTNRDSLDMIERCICLVCLDGTSGVELNDTNMALQLLHGGGYHKNGANRWYDKPMQFVVGRDGVCGTVCEHSPFDGIVLVQCTEHLLKHMKESSKKLLRADSVSELPAPRRLRWKCSPEIQAHLASSAEKLQRIVKNLDFIAYKFVNYGKEFIKKQKTSPDAYIQVALQLAFYRCHRRLVPTYESASIRRFDEGRVDNIRSATAEAFAFVKAMIDDKPALSDSEKMQRFKDAIAAQTNYTILAITGMAIDNHLLGLREVAREHFKELPEIFTDETYLTSNRFILSTSQVPTPMEMFCCYGPVVPNGYGACYNPQPEHILFCISSFKDCKETSSDMLAKAVEESLLEIRDLCNKCSSSTAKSLAKQEEATQLRSDRKL.

A compositionally biased stretch (basic and acidic residues) spans 1-22; that stretch reads MPDLEKDMQKKEKDSRSKDEPA. A disordered region spans residues 1-28; that stretch reads MPDLEKDMQKKEKDSRSKDEPAVPKLPV. H334 functions as the Proton acceptor in the catalytic mechanism. CoA-binding positions include 412–424, S450, and Q551; that span reads GKEF…TSPD.

This sequence belongs to the carnitine/choline acetyltransferase family. Detected in brain and in embryonic retina.

It carries out the reaction choline + acetyl-CoA = acetylcholine + CoA. In terms of biological role, catalyzes the reversible synthesis of acetylcholine (ACh) from acetyl CoA and choline at cholinergic synapses. In Gallus gallus (Chicken), this protein is Choline O-acetyltransferase (CHAT).